The chain runs to 125 residues: Fluoride-specific ion channel FluC (125 aa).

Helical transmembrane passes span 1 to 21, 32 to 52, 68 to 88, and 101 to 121; these read MIQALLVAVGGAIGSLLRYYV, AFPWGTLAVNVVGCFVIGVFA, LLITGFLGGFTTFSAFSLDAI, and IYTVASVGLSMAAVMAGLAVM. 2 residues coordinate Na(+): Gly75 and Thr78.

The protein belongs to the fluoride channel Fluc/FEX (TC 1.A.43) family.

The protein localises to the cell inner membrane. The enzyme catalyses fluoride(in) = fluoride(out). Na(+) is not transported, but it plays an essential structural role and its presence is essential for fluoride channel function. Functionally, fluoride-specific ion channel. Important for reducing fluoride concentration in the cell, thus reducing its toxicity. The sequence is that of Fluoride-specific ion channel FluC from Rhizobium leguminosarum bv. trifolii (strain WSM2304).